A 604-amino-acid polypeptide reads, in one-letter code: Replication protein A 70 kDa DNA-binding subunit B (604 aa).

A DNA-binding region (OB) is located at residues 170-256 (WTIKVRVTNK…QNDYEMTLNE (87 aa)). The C4-type zinc finger occupies 468 to 488 (CKTCNKKVTEAMDSGYWCESC).

This sequence belongs to the replication factor A protein 1 family. In terms of assembly, heterotrimer of RPA1, RPA2 and RPA3 (canonical replication protein A complex).

The protein localises to the nucleus. Component of the replication protein A complex (RPA) required for DNA recombination, repair and replication. The activity of RPA is mediated by single-stranded DNA binding and protein interactions. Probably involved in repair of double-strand DNA breaks (DSBs) induced by genotoxic stresses. The sequence is that of Replication protein A 70 kDa DNA-binding subunit B (RPA1B) from Arabidopsis thaliana (Mouse-ear cress).